We begin with the raw amino-acid sequence, 219 residues long: Probable GTP-binding protein EngB (219 aa).

The EngB-type G domain occupies 24 to 207; that stretch reads VQPEIAFAGR…HELIESWLRP (184 aa). GTP-binding positions include 32 to 39, 59 to 63, 81 to 84, 148 to 151, and 186 to 188; these read GRSNAGKS, GRTQH, DLPG, TKCD, and FSA. Residues Ser39 and Thr61 each contribute to the Mg(2+) site.

It belongs to the TRAFAC class TrmE-Era-EngA-EngB-Septin-like GTPase superfamily. EngB GTPase family. It depends on Mg(2+) as a cofactor.

Its function is as follows. Necessary for normal cell division and for the maintenance of normal septation. This chain is Probable GTP-binding protein EngB, found in Burkholderia cenocepacia (strain HI2424).